Here is a 215-residue protein sequence, read N- to C-terminus: MGCYSMGFVGRKAGMSRVFLEDGCSIPVTLIEATANRVVQIKTSDVDGYDAVQVTVGSRRSVLVNKPESGHFAKAKVEAGRGLWEFRVEKTQLGSYSVGSEVGLSIFAVGQKVDIQGITKGKGFQGTIKRHNFRMGDATHGNSLSHRAPGSLGQRQTPGRVFPGKKMSGHMGAVKQSVQNLEVIKIDVERCLIAVRGAIPGASGGDVLIRSASKI.

An N5-methylglutamine modification is found at glutamine 156.

The protein belongs to the universal ribosomal protein uL3 family. Part of the 50S ribosomal subunit. Forms a cluster with proteins L14 and L19. Post-translationally, methylated by PrmB.

Functionally, one of the primary rRNA binding proteins, it binds directly near the 3'-end of the 23S rRNA, where it nucleates assembly of the 50S subunit. This Xylella fastidiosa (strain M23) protein is Large ribosomal subunit protein uL3.